Reading from the N-terminus, the 185-residue chain is Large ribosomal subunit protein uL5 (185 aa).

Belongs to the universal ribosomal protein uL5 family. As to quaternary structure, part of the 50S ribosomal subunit; part of the 5S rRNA/L5/L18/L25 subcomplex. Contacts the 5S rRNA and the P site tRNA. Forms a bridge to the 30S subunit in the 70S ribosome.

In terms of biological role, this is one of the proteins that bind and probably mediate the attachment of the 5S RNA into the large ribosomal subunit, where it forms part of the central protuberance. In the 70S ribosome it contacts protein S13 of the 30S subunit (bridge B1b), connecting the 2 subunits; this bridge is implicated in subunit movement. Contacts the P site tRNA; the 5S rRNA and some of its associated proteins might help stabilize positioning of ribosome-bound tRNAs. The sequence is that of Large ribosomal subunit protein uL5 from Bradyrhizobium diazoefficiens (strain JCM 10833 / BCRC 13528 / IAM 13628 / NBRC 14792 / USDA 110).